Consider the following 298-residue polypeptide: Mimecan (298 aa).

A signal peptide spans 1–20 (MKTLQSTLLLLLFVPLIKPA). A glycan (N-linked (GlcNAc...) (keratan sulfate) asparagine) is linked at Asn-88. LRR repeat units follow at residues 112-131 (DAVPPLPKESAYLYARFNKI), 132-155 (KKLTAKDFADIPNLRRLDFTGNLI), 156-179 (EDIEDGTFSKLSLLEELSLAENQL), 180-199 (LKLPVLPPKLTLFNAKYNKI), 200-225 (KSRGIKANAFKKLNNLTFLYLDHNAL), 226-246 (ESVPLNLPESLRVIHLQFNNI), and 247-277 (ASITDDTFCKANDTSYIRDRIEEIRLEGNPI). The N-linked (GlcNAc...) (keratan sulfate) asparagine glycan is linked to Asn-214. A disulfide bridge links Cys-255 with Cys-288. The N-linked (GlcNAc...) (keratan sulfate) asparagine glycan is linked to Asn-258.

The protein belongs to the small leucine-rich proteoglycan (SLRP) family. SLRP class III subfamily. In terms of processing, contains keratan sulfate.

The protein localises to the secreted. The protein resides in the extracellular space. It is found in the extracellular matrix. Functionally, induces bone formation in conjunction with TGF-beta-1 or TGF-beta-2. The polypeptide is Mimecan (OGN) (Pongo abelii (Sumatran orangutan)).